The sequence spans 342 residues: Adenylate isopentenyltransferase 6, chloroplastic (342 aa).

A chloroplast-targeting transit peptide spans 1 to 33; sequence MQQLMTLLSPPLSHSSLLPTVTTKFGSPRLVTT. 52–59 serves as a coordination point for ATP; that stretch reads GTTGTGKS.

This sequence belongs to the IPP transferase family. Expressed in siliques, at the mRNA level.

It localises to the plastid. The protein localises to the chloroplast. The enzyme catalyses dimethylallyl diphosphate + ADP = N(6)-(dimethylallyl)adenosine 5'-diphosphate + diphosphate. It carries out the reaction dimethylallyl diphosphate + ATP = N(6)-(dimethylallyl)adenosine 5'-triphosphate + diphosphate. Its function is as follows. Involved in cytokinin biosynthesis. Catalyzes the transfer of an isopentenyl group from dimethylallyl diphosphate (DMAPP) to ATP and ADP. The chain is Adenylate isopentenyltransferase 6, chloroplastic (IPT6) from Arabidopsis thaliana (Mouse-ear cress).